Reading from the N-terminus, the 417-residue chain is Serine hydroxymethyltransferase (417 aa).

Residues Leu-119 and 123 to 125 each bind (6S)-5,6,7,8-tetrahydrofolate; that span reads GHL. Residue Lys-227 is modified to N6-(pyridoxal phosphate)lysine.

This sequence belongs to the SHMT family. Homodimer. It depends on pyridoxal 5'-phosphate as a cofactor.

Its subcellular location is the cytoplasm. It carries out the reaction (6R)-5,10-methylene-5,6,7,8-tetrahydrofolate + glycine + H2O = (6S)-5,6,7,8-tetrahydrofolate + L-serine. The protein operates within one-carbon metabolism; tetrahydrofolate interconversion. It functions in the pathway amino-acid biosynthesis; glycine biosynthesis; glycine from L-serine: step 1/1. Functionally, catalyzes the reversible interconversion of serine and glycine with tetrahydrofolate (THF) serving as the one-carbon carrier. This reaction serves as the major source of one-carbon groups required for the biosynthesis of purines, thymidylate, methionine, and other important biomolecules. Also exhibits THF-independent aldolase activity toward beta-hydroxyamino acids, producing glycine and aldehydes, via a retro-aldol mechanism. In Buchnera aphidicola subsp. Cinara cedri (strain Cc), this protein is Serine hydroxymethyltransferase.